Reading from the N-terminus, the 380-residue chain is Cytochrome b (380 aa).

The next 4 helical transmembrane spans lie at 34–54 (FGSL…LLAM), 78–99 (WLIR…YLHI), 114–134 (WNTG…GYVL), and 179–199 (FFAL…IHLT). Heme b contacts are provided by His84 and His98. Heme b contacts are provided by His183 and His197. His202 provides a ligand contact to a ubiquinone. Transmembrane regions (helical) follow at residues 227-247 (LKDI…ALFS), 289-309 (LGGV…PFLH), 321-341 (LSQL…WVGS), and 348-368 (FIII…ILFP).

It belongs to the cytochrome b family. As to quaternary structure, the cytochrome bc1 complex contains 11 subunits: 3 respiratory subunits (MT-CYB, CYC1 and UQCRFS1), 2 core proteins (UQCRC1 and UQCRC2) and 6 low-molecular weight proteins (UQCRH/QCR6, UQCRB/QCR7, UQCRQ/QCR8, UQCR10/QCR9, UQCR11/QCR10 and a cleavage product of UQCRFS1). This cytochrome bc1 complex then forms a dimer. It depends on heme b as a cofactor.

Its subcellular location is the mitochondrion inner membrane. In terms of biological role, component of the ubiquinol-cytochrome c reductase complex (complex III or cytochrome b-c1 complex) that is part of the mitochondrial respiratory chain. The b-c1 complex mediates electron transfer from ubiquinol to cytochrome c. Contributes to the generation of a proton gradient across the mitochondrial membrane that is then used for ATP synthesis. This chain is Cytochrome b (MT-CYB), found in Macronectes giganteus (Southern giant petrel).